The sequence spans 226 residues: Ribose-5-phosphate isomerase A (226 aa).

Residues 33–36 (TGST), 86–89 (DGAD), and 99–102 (KGGG) contribute to the substrate site. Glu108 serves as the catalytic Proton acceptor. Residue Lys126 coordinates substrate.

This sequence belongs to the ribose 5-phosphate isomerase family. In terms of assembly, homodimer.

The enzyme catalyses aldehydo-D-ribose 5-phosphate = D-ribulose 5-phosphate. The protein operates within carbohydrate degradation; pentose phosphate pathway; D-ribose 5-phosphate from D-ribulose 5-phosphate (non-oxidative stage): step 1/1. In terms of biological role, catalyzes the reversible conversion of ribose-5-phosphate to ribulose 5-phosphate. This is Ribose-5-phosphate isomerase A from Bordetella bronchiseptica (strain ATCC BAA-588 / NCTC 13252 / RB50) (Alcaligenes bronchisepticus).